A 242-amino-acid polypeptide reads, in one-letter code: MCALVPPLYPNFGWPCGDHSFYETDDVSNTFLDFPLPDLTVTHENVSSENNRTLLDNPVVMKKLNHNASERERRKKINTMFSSLRSCLPPTNQTKKLSVSATVSQALKYIPELQEQVKKLMKKKEELSFQISGQRDLVYTDQNSKSEEGVTSYASTVSSTRLSETEVMVQISSLQTEKCSFGNVLSGVEEDGLVLVGASSSRSHGERLFYSMHLQIKNGQVNSEELGDRLLYLYEKCGHSFT.

Residues 61–113 (MKKLNHNASERERRKKINTMFSSLRSCLPPTNQTKKLSVSATVSQALKYIPEL) enclose the bHLH domain.

Homodimer. Expressed constitutively in roots, leaves, and stems.

The protein localises to the nucleus. Plays a role in metal homeostasis. Confers tolerance to high zinc (Zn) and nickel (Ni). This is Transcription factor bHLH100 (BHLH100) from Arabidopsis thaliana (Mouse-ear cress).